The primary structure comprises 335 residues: Protein PXR1 (335 aa).

The G-patch domain occupies 25–71 (KSRFGHKYLEKLGWEPGKGLGHASHAMSTHIKVTIKDDTMGLGAKLK). A disordered region spans residues 155-310 (DDAEDAKVSG…PPTISTRLSV (156 aa)). The segment covering 163–175 (SGKHRDRKSRAKR) has biased composition (basic residues). Over residues 183 to 209 (LKEKCRDIDRTRKSKRKEKEQEKEKNR) the composition is skewed to basic and acidic residues. Over residues 226 to 257 (KKDKKDKKEKKEKKEKKEKKEKKHKEKSNKRL) the composition is skewed to basic residues.

The protein belongs to the PINX1 family.

It is found in the nucleus. Its subcellular location is the nucleolus. Functionally, involved in rRNA-processing at A0, A1 and A2 sites and negatively regulates telomerase. The sequence is that of Protein PXR1 (PXR1) from Eremothecium gossypii (strain ATCC 10895 / CBS 109.51 / FGSC 9923 / NRRL Y-1056) (Yeast).